Here is a 428-residue protein sequence, read N- to C-terminus: Zinc metalloproteinase nas-27 (428 aa).

An N-terminal signal peptide occupies residues 1–17 (MQILPIFFPLLITSLHA). Residues 18 to 57 (IPRGRRAVRNRNEGDINSLVGVGQYLYQGDIAVVKSRARR) constitute a propeptide that is removed on maturation. The Peptidase M12A domain occupies 58–255 (AVIRQKHKKW…SRMNVLYNCH (198 aa)). Cystine bridges form between cysteine 99–cysteine 254, cysteine 120–cysteine 141, cysteine 258–cysteine 276, cysteine 281–cysteine 290, cysteine 306–cysteine 339, and cysteine 366–cysteine 386. Residue histidine 150 coordinates Zn(2+). Glutamate 151 is a catalytic residue. Zn(2+) contacts are provided by histidine 154 and histidine 160. Asparagine 181 is a glycosylation site (N-linked (GlcNAc...) asparagine). In terms of domain architecture, EGF-like spans 250 to 291 (VLYNCHERCANTLNRCQQGGYPAPSDCSQCVCPDGFGGNFCE). Residues 306 to 428 (CGGVLWASET…LDFNIEYRAV (123 aa)) enclose the CUB domain. An N-linked (GlcNAc...) asparagine glycan is attached at asparagine 377.

It depends on Zn(2+) as a cofactor.

The protein resides in the secreted. Its function is as follows. Metalloprotease. The protein is Zinc metalloproteinase nas-27 (nas-27) of Caenorhabditis elegans.